The primary structure comprises 287 residues: 1-acyl-sn-glycerol-3-phosphate acyltransferase alpha (287 aa).

Positions 1-26 are cleaved as a signal peptide; it reads MELWPGAGTLLLLLFLLLLLLLPTLW. Over 27 to 37 the chain is Lumenal; that stretch reads FCSPSAKYFFK. A helical transmembrane segment spans residues 38–58; the sequence is MAFYNGWILFLAVLAIPVCAV. Residues 59 to 127 lie on the Cytoplasmic side of the membrane; that stretch reads RGRNVENMKI…PGHCVPIAKR (69 aa). An HXXXXD motif motif is present at residues 104–109; it reads HQSSLD. A helical transmembrane segment spans residues 128–148; sequence ELLWAGSAGLACWLAGVIFID. Topologically, residues 149 to 192 are lumenal; sequence RKRTGDAISVMSEVAQTLLTQDVRVWVFPEGTRNHNGSMLPFKR. The short motif at 178–181 is the EGTR motif element; it reads EGTR.

This sequence belongs to the 1-acyl-sn-glycerol-3-phosphate acyltransferase family.

The protein resides in the endoplasmic reticulum membrane. It catalyses the reaction a 1-acyl-sn-glycero-3-phosphate + an acyl-CoA = a 1,2-diacyl-sn-glycero-3-phosphate + CoA. The enzyme catalyses 1-(9Z-octadecenoyl)-sn-glycero-3-phosphate + (9Z)-octadecenoyl-CoA = 1,2-di-(9Z-octadecenoyl)-sn-glycero-3-phosphate + CoA. It carries out the reaction 1-(9Z-octadecenoyl)-sn-glycero-3-phosphate + hexadecanoyl-CoA = 1-(9Z)-octadecenoyl-2-hexadecanoyl-sn-glycero-3-phosphate + CoA. The catalysed reaction is heptadecanoyl-CoA + 1-(9Z-octadecenoyl)-sn-glycero-3-phosphate = 1-(9Z)-octadecenoyl-2-heptadecanoyl-sn-glycero-3-phosphate + CoA. It catalyses the reaction 1-(9Z-octadecenoyl)-sn-glycero-3-phosphate + octadecanoyl-CoA = 1-(9Z-octadecenoyl)-2-octadecanoyl-sn-glycero-3-phosphate + CoA. The enzyme catalyses 1-(9Z-octadecenoyl)-sn-glycero-3-phosphate + (9Z,12Z)-octadecadienoyl-CoA = 1-(9Z)-octadecenoyl-2-(9Z,12Z)-octadecadienoyl-sn-glycero-3-phosphate + CoA. It carries out the reaction 1-(9Z-octadecenoyl)-sn-glycero-3-phosphate + tetradecanoyl-CoA = 1-(9Z)-octadecenoyl-2-tetradecanoyl-sn-glycero-3-phosphate + CoA. The catalysed reaction is pentadecanoyl-CoA + 1-(9Z-octadecenoyl)-sn-glycero-3-phosphate = 1-(9Z)-octadecenoyl-2-pentadecanoyl-sn-glycero-3-phosphate + CoA. It catalyses the reaction 1-hexadecanoyl-sn-glycero-3-phosphate + (9Z)-octadecenoyl-CoA = 1-hexadecanoyl-2-(9Z-octadecenoyl)-sn-glycero-3-phosphate + CoA. The enzyme catalyses 1-(9Z,12Z,15Z)-octadecatrienoyl-sn-glycero-3-phosphate + (9Z)-octadecenoyl-CoA = 1-(9Z,12Z,15Z)-octadecatrienoyl-2-(9Z)-octadecenoyl-sn-glycero-3-phosphate + CoA. It carries out the reaction 1-(6Z,9Z,12Z-octadecatrienoyl)-sn-glycero-3-phosphate + (9Z)-octadecenoyl-CoA = (6Z,9Z,12Z)-octadecatrienoyl-2-(9Z)-octadecenoyl-sn-glycero-3-phosphate + CoA. The catalysed reaction is 1-eicosanoyl-sn-glycero-3-phosphate + (9Z)-octadecenoyl-CoA = 1-eicosanoyl-2-(9Z)-octadecenoyl-sn-glycero-3-phosphate + CoA. It catalyses the reaction 1-tetradecanoyl-sn-glycerol 3-phosphate + (9Z)-octadecenoyl-CoA = 1-tetradecanoyl-2-(9Z)-octadecenoyl-sn-glycero-3-phosphate + CoA. The enzyme catalyses 1-(9Z-octadecenoyl)-sn-glycero-3-phosphate + (5Z,8Z,11Z,14Z)-eicosatetraenoyl-CoA = 1-(9Z)-octadecenoyl-2-(5Z,8Z,11Z,14Z)-eicosatetraenoyl-sn-glycero-3-phosphate + CoA. It carries out the reaction 1-(9Z-octadecenoyl)-sn-glycero-3-phosphate + dodecanoyl-CoA = 1-(9Z)-octadecenoyl-2-dodecanoyl-sn-glycero-3-phosphate + CoA. The catalysed reaction is (6Z)-octadecenoyl-CoA + 1-(9Z-octadecenoyl)-sn-glycero-3-phosphate = 1-(9Z)-octadecenoyl-2-(6Z)-octadecenoyl-sn-glycero-3-phosphate + CoA. It catalyses the reaction (11Z)-octadecenoyl-CoA + 1-(9Z-octadecenoyl)-sn-glycero-3-phosphate = 1-(9Z)-octadecenoyl-2-(11Z)-octadecenoyl-sn-glycero-3-phosphate + CoA. The enzyme catalyses (9Z)-hexadecenoyl-CoA + 1-(9Z-octadecenoyl)-sn-glycero-3-phosphate = 1-(9Z-octadecenoyl)-2-(9Z-hexadecenoyl)-sn-glycero-3-phosphate + CoA. It functions in the pathway phospholipid metabolism; CDP-diacylglycerol biosynthesis; CDP-diacylglycerol from sn-glycerol 3-phosphate: step 2/3. In terms of biological role, converts 1-acyl-sn-glycerol-3-phosphate (lysophosphatidic acid or LPA) into 1,2-diacyl-sn-glycerol-3-phosphate (phosphatidic acid or PA) by incorporating an acyl moiety at the sn-2 position of the glycerol backbone. The protein is 1-acyl-sn-glycerol-3-phosphate acyltransferase alpha (AGPAT1) of Ovis aries (Sheep).